The primary structure comprises 535 residues: MASIRSCVSVNPAAAVTPVKYKSARVGAAGLDPKGLRISCSSSSSSLAAGGGDGCRDAGCASSSGRGSGVVGSVGDGWWGRRGGQRERAVAAMCSAGMEGVRHGAAAVASVPAASASALPERAKVVALVAAVMLLCNADRVVMSVAVVPFAAQYGWSSSFLGIVQSSFLWGYVFSSMVGGALADRYGGKKVMAGAAALWSLATFLTPWAASQSTIMLLAIRALFGLAEGVAFPTMSTFLPKWFPTHERATAVGISMGGFHLGNVISFLATPIIMSHIGLAGTFAFFASLGYLWLSVWLFNVESDPLDSRTISKSELQLILAGRSASKIQGSKFPSLREILSKIEMWAIIVANVVNNWGYFVLLSWMPVYFKTVYNVNLKQAAWFSAIPWAVMALSGYVAGASADFLIKSGFSVALVRKIMQSIGFIGPGVSLLCLRFAQTPSVAAVLMTIALSLSSFSQAGYFCNVQDIAPKYAGSLHGLTNGIGTVAAIVSTIGTGYFVQWLGSFQAFLTLTAVLYFSATVFYNTYATGDLIFD.

Residues 1–95 constitute a chloroplast transit peptide; sequence MASIRSCVSV…RERAVAAMCS (95 aa). 12 helical membrane passes run 125-145, 160-180, 191-211, 215-235, 254-274, 279-299, 343-363, 381-401, 413-433, 443-463, 483-503, and 504-524; these read VVALVAAVMLLCNADRVVMSV, FLGIVQSSFLWGYVFSSMVGG, VMAGAAALWSLATFLTPWAAS, IMLLAIRALFGLAEGVAFPTM, ISMGGFHLGNVISFLATPIIM, LAGTFAFFASLGYLWLSVWLF, IEMWAIIVANVVNNWGYFVLL, AAWFSAIPWAVMALSGYVAGA, VALVRKIMQSIGFIGPGVSLL, VAAVLMTIALSLSSFSQAGYF, GIGTVAAIVSTIGTGYFVQWL, and GSFQAFLTLTAVLYFSATVFY.

This sequence belongs to the major facilitator superfamily. Sodium/anion cotransporter (TC 2.A.1.14) family.

The protein resides in the plastid. It is found in the chloroplast membrane. Probable anion transporter. In Oryza sativa subsp. japonica (Rice), this protein is Probable anion transporter 2, chloroplastic (PHT4;2).